Reading from the N-terminus, the 210-residue chain is Guanylate kinase (210 aa).

One can recognise a Guanylate kinase-like domain in the interval 8–188 (GNLFIIAAPS…SLASLEHIVL (181 aa)). 15–22 (APSGAGKS) lines the ATP pocket.

Belongs to the guanylate kinase family.

It is found in the cytoplasm. The enzyme catalyses GMP + ATP = GDP + ADP. Essential for recycling GMP and indirectly, cGMP. The chain is Guanylate kinase from Idiomarina loihiensis (strain ATCC BAA-735 / DSM 15497 / L2-TR).